Reading from the N-terminus, the 735-residue chain is MCTRPGLAALLVLMTSCASSFSRADTQSASAAALSAASADAQAARQQQEQHLVAQQQQQQQQQQQHSNNNEPQQRAPSLDPYYRSLLDGSQGGQLFAPAQPVSQPDLSPDFSNPMGSSLSQSGTPEDSDTKVDTRGAAPKFFGKKRGQAPRFFGKKRAMAPKFFGKKSSEFPTSNSEQLALDTRGSPRFFGKKSFPESNREQRGSPRFFGKKRFDENVDIDERAAPRFFGKKSSGESAGDSGYISVASRGSPRFFGKKQDDDIMIAARGSPRFFGKKRSDDNVALDLRGSPRFFGKRQSSDLDDEISVALRGSPRFFGKKRADDEDILLGERGSPRFFGKKRANDENISFSLRGSPRFFGKKRSDESDDDNIGLVARGSPRFFGKKRSDETDDENIGLMARGSPRFFGRKRSDGLDDGGNIIDVATRGSPRFFGKKRSNSDSSDKSSDSALSSSESGRQTRQAPRFFGKRYVDEHHVSKRAAATAFPLIIEARQAPRFFGKREYRYPPRGSPHFIGKRFSLYRSPGKYSLSSPYMSAKEFKETFRRSDPFFMGKRTAELNEEGSDDFTNDDTDDENEYDETVLFKRGAPRFVGKRGAPRFLGRRGAPRFIGRRGAPRFVGKRGPPRFIGKRDLDWYQKALCAEADILELDDCADFLGNDDVKRQAPRFIGRKRGEDVSERDYAQLLEALSRLQAIKQIKARIQNEKRLWVPGMVGRRSEYNLGPFDEFVDESMER.

The N-terminal stretch at 1–20 (MCTRPGLAALLVLMTSCASS) is a signal peptide. The propeptide occupies 21–135 (FSRADTQSAS…EDSDTKVDTR (115 aa)). Residues 33–65 (ALSAASADAQAARQQQEQHLVAQQQQQQQQQQQ) show a composition bias toward low complexity. 2 disordered regions span residues 33–212 (ALSA…FGKK) and 229–251 (FGKK…SRGS). Polar residues-rich tracts occupy residues 66–76 (HSNNNEPQQRA) and 101–125 (PVSQ…SGTP). 3 positions are modified to phenylalanine amide: F142, F153, and F164. Positions 142-159 (FGKKRGQAPRFFGKKRAM) are enriched in basic residues. Residues 168–184 (SSEFPTSNSEQLALDTR) constitute a propeptide that is removed on maturation. F190 bears the Phenylalanine amide mark. Residues 194 to 203 (SFPESNREQR) constitute a propeptide that is removed on maturation. The span at 194-204 (SFPESNREQRG) shows a compositional bias: basic and acidic residues. A phenylalanine amide mark is found at F209 and F229. Positions 214 to 229 (FDENVDIDERAAPRFF) are cleaved as a propeptide — linker peptide. The propeptide occupies 233-249 (SSGESAGDSGYISVASR). At F255 the chain carries Phenylalanine amide. The propeptide at 259–267 (QDDDIMIAA) is linker peptide. F274 bears the Phenylalanine amide mark. The propeptide at 279-287 (SDDNVALDL) is linker peptide. Residue F294 is modified to Phenylalanine amide. A propeptide spanning residues 298 to 311 (QSSDLDDEISVALR) is cleaved from the precursor. A Phenylalanine amide modification is found at F317. Positions 321-332 (RADDEDILLGER) are excised as a propeptide. F338 carries the phenylalanine amide modification. Positions 342-353 (RANDENISFSLR) are excised as a propeptide. Disordered regions lie at residues 352–373 (LRGS…DNIG) and 381–400 (RFFG…GLMA). F359 is modified (phenylalanine amide). The propeptide occupies 363 to 377 (RSDESDDDNIGLVAR). F383 carries the phenylalanine amide modification. The propeptide occupies 387–401 (RSDETDDENIGLMAR). The residue at position 407 (F407) is a Phenylalanine amide. A propeptide spans 412–426 (SDGLDDGGNIIDVAT) (linker peptide). The interval 430 to 464 (PRFFGKKRSNSDSSDKSSDSALSSSESGRQTRQAP) is disordered. F433 bears the Phenylalanine amide mark. The propeptide occupies 437–461 (RSNSDSSDKSSDSALSSSESGRQTR). The segment covering 438-447 (SNSDSSDKSS) has biased composition (basic and acidic residues). Position 462 is a pyrrolidone carboxylic acid (Q462). A Phenylalanine amide modification is found at F467. A propeptide spanning residues 471–493 (YVDEHHVSKRAAATAFPLIIEAR) is cleaved from the precursor. A Pyrrolidone carboxylic acid modification is found at Q494. A Phenylalanine amide modification is found at F499. The propeptide occupies 503-509 (EYRYPPR). I515 is subject to Isoleucine amide. The propeptide occupies 519-546 (FSLYRSPGKYSLSSPYMSAKEFKETFRR). M552 carries the post-translational modification Methionine amide. Residues 556–585 (TAELNEEGSDDFTNDDTDDENEYDETVLFK) constitute a propeptide that is removed on maturation. At V592 the chain carries Valine amide. At L601 the chain carries Leucine amide. I610 bears the Isoleucine amide mark. Position 619 is a valine amide (V619). I628 bears the Isoleucine amide mark. The propeptide at 632-661 (DLDWYQKALCAEADILELDDCADFLGNDDV) is linker peptide. Pyrrolidone carboxylic acid is present on Q664. I669 carries the isoleucine amide modification. A propeptide spans 674-705 (GEDVSERDYAQLLEALSRLQAIKQIKARIQNE) (linker peptide). The residue at position 714 (V714) is a Valine amide. Residues 715–735 (GRRSEYNLGPFDEFVDESMER) constitute a propeptide that is removed on maturation.

Expressed in the CNS and peripheral tissues (the digestive tract, vasculature, and the reproductive organs).

The protein localises to the secreted. Functionally, has some structural and functional features similar to vertebrate opioid peptides. AMRPs are inhibitory on Aplysia esophagus, penis retractor muscle, and body wall muscle. The chain is MIP-related peptides (MRP) from Aplysia californica (California sea hare).